Consider the following 441-residue polypeptide: UPF0761 membrane protein Clim_1521 (441 aa).

6 helical membrane-spanning segments follow: residues 54-74 (IFLS…PFLA), 122-142 (TVPL…ISTI), 161-181 (AFTL…SSLG), 203-223 (LISF…YMLV), 233-253 (AFSG…WFVF), and 266-286 (GAIS…LVVL).

Belongs to the UPF0761 family.

The protein localises to the cell inner membrane. This Chlorobium limicola (strain DSM 245 / NBRC 103803 / 6330) protein is UPF0761 membrane protein Clim_1521.